The chain runs to 161 residues: MALHRDDICDRIRTLALPVIDSMNLELVEVEYKRSGREAVLRLFIDKEGGVTLDDCADLSRELSTLLDVEDLIPCEYSLEVSSPGLDRPLKSEADYERFSGRLIKVRTYEPYQDDAGNRRKTFLGRLEGLKDGSVVMSLTEGQTASIPLERIAKAQLEFEF.

The protein belongs to the RimP family.

The protein localises to the cytoplasm. Its function is as follows. Required for maturation of 30S ribosomal subunits. The protein is Ribosome maturation factor RimP of Pelobacter propionicus (strain DSM 2379 / NBRC 103807 / OttBd1).